A 283-amino-acid chain; its full sequence is 4-diphosphocytidyl-2-C-methyl-D-erythritol kinase (283 aa).

The active site involves K10. Residue 99-109 coordinates ATP; the sequence is PMGGGLGGGSS. D141 is an active-site residue.

Belongs to the GHMP kinase family. IspE subfamily. As to quaternary structure, homodimer.

It catalyses the reaction 4-CDP-2-C-methyl-D-erythritol + ATP = 4-CDP-2-C-methyl-D-erythritol 2-phosphate + ADP + H(+). The protein operates within isoprenoid biosynthesis; isopentenyl diphosphate biosynthesis via DXP pathway; isopentenyl diphosphate from 1-deoxy-D-xylulose 5-phosphate: step 3/6. Catalyzes the phosphorylation of the position 2 hydroxy group of 4-diphosphocytidyl-2C-methyl-D-erythritol. This chain is 4-diphosphocytidyl-2-C-methyl-D-erythritol kinase, found in Citrobacter koseri (strain ATCC BAA-895 / CDC 4225-83 / SGSC4696).